The chain runs to 189 residues: Imidazoleglycerol-phosphate dehydratase (189 aa).

The protein belongs to the imidazoleglycerol-phosphate dehydratase family.

The protein resides in the cytoplasm. It carries out the reaction D-erythro-1-(imidazol-4-yl)glycerol 3-phosphate = 3-(imidazol-4-yl)-2-oxopropyl phosphate + H2O. It participates in amino-acid biosynthesis; L-histidine biosynthesis; L-histidine from 5-phospho-alpha-D-ribose 1-diphosphate: step 6/9. In Nautilia profundicola (strain ATCC BAA-1463 / DSM 18972 / AmH), this protein is Imidazoleglycerol-phosphate dehydratase.